The chain runs to 175 residues: DELTA-stichotoxin-She4b (175 aa).

The plays an important role in the hemolytic activity stretch occupies residues alanine 1–alanine 10. An N-terminal region region spans residues glycine 9 to serine 28. Positions 52, 85, 103, 105, 131, 135, and 136 each coordinate phosphocholine. The segment at serine 103–lysine 118 is trp-rich region, which is important for the binding to lipid membrane. The Cell attachment site, crucial for protein stability signature appears at arginine 141–aspartate 143.

Octamer or nonamer in membranes. Monomer in the soluble state. Originally described as forming tetramer in the presence of a lipidic interface. As to expression, expressed in tentacles and mesenteric filaments.

Its subcellular location is the secreted. It localises to the nematocyst. The protein resides in the target cell membrane. Functionally, pore-forming protein that forms cations-selective hydrophilic pores of around 1 nm and causes cardiac stimulation and cytolysis. Pore formation is a multi-step process that involves specific recognition of membrane sphingomyelin (but neither cholesterol nor phosphatidylcholine) using aromatic rich region and adjacent phosphocholine (POC) binding site, firm binding to the membrane (mainly driven by hydrophobic interactions) accompanied by the transfer of the N-terminal region to the lipid-water interface and finally pore formation after oligomerization of monomers. Cytolytic effects include red blood cells hemolysis, platelet aggregation and lysis, cytotoxic and cytostatic effects on fibroblasts. Lethality in mammals has been ascribed to severe vasospasm of coronary vessels, cardiac arrhythmia, and inotropic effects. The polypeptide is DELTA-stichotoxin-She4b (Stichodactyla helianthus (Sun anemone)).